The primary structure comprises 363 residues: MSRPQFDPSAYAAQLEDKKSRLAGLLAPFAAPAPEIFESPREHYRLRAEFRLWRETGNEKRHYAMFEQGDKHTPILIEDFPIASRRINELMPRLKAAWADPALGFKLFQVEFLTTLAGDALITLCYHRPIDDAWRQAAEKLAAELGVNLVGRSRGKRIVVGRDYVEEELSVAGRRFRYRQPEGAFTQPNGEVNQKMLGWAYEALGQRDDDLLELYCGNGNFTLPLATRVRKVLATEISKSSVNAALANLADNAVDNVSLVRLSAEELTQALNEVRPFRRLADIDLKSYAFGNVFVDPPRAGMDPDTCELTRRFERILYISCNPETLAQNIAQLHDTHRISRCALFDQFPYTHHMESGVLLERR.

S-adenosyl-L-methionine is bound by residues Gln-187, Tyr-215, Asn-220, Glu-236, and Asp-296. Cys-321 acts as the Nucleophile in catalysis. Glu-355 serves as the catalytic Proton acceptor.

The protein belongs to the class I-like SAM-binding methyltransferase superfamily. RNA M5U methyltransferase family. TrmA subfamily.

The enzyme catalyses uridine(54) in tRNA + S-adenosyl-L-methionine = 5-methyluridine(54) in tRNA + S-adenosyl-L-homocysteine + H(+). The catalysed reaction is uridine(341) in tmRNA + S-adenosyl-L-methionine = 5-methyluridine(341) in tmRNA + S-adenosyl-L-homocysteine + H(+). Dual-specificity methyltransferase that catalyzes the formation of 5-methyluridine at position 54 (m5U54) in all tRNAs, and that of position 341 (m5U341) in tmRNA (transfer-mRNA). This is tRNA/tmRNA (uracil-C(5))-methyltransferase from Pseudomonas aeruginosa (strain UCBPP-PA14).